We begin with the raw amino-acid sequence, 135 residues long: Allatotropins (135 aa).

The first 22 residues, Met-1–Ala-22, serve as a signal peptide directing secretion. Phenylalanine amide is present on Phe-51. The propeptide occupies Asp-55–Ala-135.

Allatotropin: Expressed in corpora cardiaca (CC), corpora allata (CA), antennal lobe (AL) and gnathal ganglion (GNG) (protein level). Expression in AL detected in all animals, expression in GNG detected in most animals and expression in CA and CC detected in few animals (at protein level). Allatotropin-PP-1: Expressed in corpora cardiaca (CC), corpora allata (CA), antennal lobe (AL) and gnathal ganglion (GNG) (at protein level). Expression in AL detected in all animals and expression in GNG, CA and CC detected in some animals (at protein level).

It localises to the secreted. Functionally, neuropeptide stimulator of juvenile hormone synthesis. The polypeptide is Allatotropins (Agrotis ipsilon (Black cutworm moth)).